The sequence spans 173 residues: Glutamyl-tRNA(Gln) amidotransferase subunit F, mitochondrial (173 aa).

The N-terminal 15 residues, 1–15 (MSRFMIRAVFFRRYT), are a transit peptide targeting the mitochondrion.

This sequence belongs to the GatF family. Subunit of the heterotrimeric GatFAB amidotransferase (AdT) complex, composed of A, B and F subunits.

The protein localises to the mitochondrion inner membrane. The enzyme catalyses L-glutamyl-tRNA(Gln) + L-glutamine + ATP + H2O = L-glutaminyl-tRNA(Gln) + L-glutamate + ADP + phosphate + H(+). Allows the formation of correctly charged Gln-tRNA(Gln) through the transamidation of misacylated Glu-tRNA(Gln) in the mitochondria. The reaction takes place in the presence of glutamine and ATP through an activated gamma-phospho-Glu-tRNA(Gln). Required for proper protein synthesis within the mitochondrion. The chain is Glutamyl-tRNA(Gln) amidotransferase subunit F, mitochondrial from Candida glabrata (strain ATCC 2001 / BCRC 20586 / JCM 3761 / NBRC 0622 / NRRL Y-65 / CBS 138) (Yeast).